The chain runs to 207 residues: Large ribosomal subunit protein uL4 (207 aa).

The tract at residues 49 to 78 (HAVKNRSAVSGGGRKPWRQKGTGRARQGSI) is disordered.

The protein belongs to the universal ribosomal protein uL4 family. As to quaternary structure, part of the 50S ribosomal subunit.

Its function is as follows. One of the primary rRNA binding proteins, this protein initially binds near the 5'-end of the 23S rRNA. It is important during the early stages of 50S assembly. It makes multiple contacts with different domains of the 23S rRNA in the assembled 50S subunit and ribosome. In terms of biological role, forms part of the polypeptide exit tunnel. This is Large ribosomal subunit protein uL4 from Streptococcus suis (strain 98HAH33).